A 511-amino-acid polypeptide reads, in one-letter code: Exodeoxyribonuclease 7 large subunit (511 aa).

Belongs to the XseA family. In terms of assembly, heterooligomer composed of large and small subunits.

It localises to the cytoplasm. The enzyme catalyses Exonucleolytic cleavage in either 5'- to 3'- or 3'- to 5'-direction to yield nucleoside 5'-phosphates.. Its function is as follows. Bidirectionally degrades single-stranded DNA into large acid-insoluble oligonucleotides, which are then degraded further into small acid-soluble oligonucleotides. This Brucella melitensis biotype 2 (strain ATCC 23457) protein is Exodeoxyribonuclease 7 large subunit.